The sequence spans 170 residues: UPF0161 protein At3g09310 (170 aa).

Disordered stretches follow at residues 49-70 (CLSA…GEEL) and 147-170 (SGIK…QRKI). The segment covering 154–170 (GDEEEEDNYDDEDQRKI) has biased composition (acidic residues).

This sequence belongs to the UPF0161 family.

The sequence is that of UPF0161 protein At3g09310 from Arabidopsis thaliana (Mouse-ear cress).